The chain runs to 606 residues: Scavenger receptor class A member 3 (606 aa).

The Cytoplasmic portion of the chain corresponds to 1 to 56 (MKVRSAGGDGDALCVTEEDLAGDDEDMPTFPCTQKGRPGPRCSRCQKNLSLHTSVR). The chain crosses the membrane as a helical; Signal-anchor for type II membrane protein span at residues 57–77 (ILYLFLALLLVAVAVLASLVF). Over 78–606 (RKVDSLSEDI…PGPPGSQSFY (529 aa)) the chain is Extracellular. 10 N-linked (GlcNAc...) asparagine glycosylation sites follow: Asn-115, Asn-182, Asn-224, Asn-257, Asn-313, Asn-337, Asn-365, Asn-400, Asn-430, and Asn-451. The segment at 454–606 (ILRGAPGPPG…PGPPGSQSFY (153 aa)) is disordered. Residues 455–513 (LRGAPGPPGPRGFKGDMGVKGPVGGRGPKGDPGSLGPLGPQGPQGQPGEAGPVGERGPV) enclose the Collagen-like 1 domain. Residues 485–519 (DPGSLGPLGPQGPQGQPGEAGPVGERGPVGPRGFP) are compositionally biased toward low complexity. The span at 526-535 (GSFGTGGPRG) shows a compositional bias: gly residues. A Collagen-like 2 domain is found at 544-603 (GPPGPEGPPGSPGPSGPQGKPGIAGKTGSPGQRGAMGPKGEPGIQGPPGLPGPPGPPGSQ). Pro residues-rich tracts occupy residues 545-558 (PPGP…PGPS) and 591-600 (PGLPGPPGPP).

In terms of tissue distribution, expressed ubiquitously.

The protein resides in the endoplasmic reticulum membrane. It is found in the golgi apparatus membrane. Seems to protect cells by scavenging oxidative molecules or harmful products of oxidation. The chain is Scavenger receptor class A member 3 (SCARA3) from Homo sapiens (Human).